The primary structure comprises 144 residues: MAANILVIHGPNLNLLGRREPAVYGQTTLEDINRNLTVKAQAAPVALSIFQSNAEHELIDRVQGAMSDGTDFIIINPAALTHTSIALRDALAATSLPFVEIHLSNVYARESFRRTSYFSDIAVGVISGLGAAGYELALQFALTR.

The Proton acceptor role is filled by Y24. Substrate-binding residues include N76, H82, and D89. H102 acts as the Proton donor in catalysis. Substrate contacts are provided by residues 103 to 104 (LS) and R113.

The protein belongs to the type-II 3-dehydroquinase family. As to quaternary structure, homododecamer.

The catalysed reaction is 3-dehydroquinate = 3-dehydroshikimate + H2O. Its pathway is metabolic intermediate biosynthesis; chorismate biosynthesis; chorismate from D-erythrose 4-phosphate and phosphoenolpyruvate: step 3/7. Its function is as follows. Catalyzes a trans-dehydration via an enolate intermediate. In Nitrosomonas europaea (strain ATCC 19718 / CIP 103999 / KCTC 2705 / NBRC 14298), this protein is 3-dehydroquinate dehydratase.